Consider the following 150-residue polypeptide: Anti-sigma F factor (150 aa).

The protein belongs to the anti-sigma-factor family.

The catalysed reaction is L-seryl-[protein] + ATP = O-phospho-L-seryl-[protein] + ADP + H(+). It carries out the reaction L-threonyl-[protein] + ATP = O-phospho-L-threonyl-[protein] + ADP + H(+). Functionally, binds to sigma F and blocks its ability to form an RNA polymerase holoenzyme (E-sigma F). Phosphorylates SpoIIAA on a serine residue. This phosphorylation may enable SpoIIAA to act as an anti-anti-sigma factor that counteracts SpoIIAB and thus releases sigma F from inhibition. This chain is Anti-sigma F factor, found in Pasteuria penetrans.